The following is a 189-amino-acid chain: Putative manganese efflux pump MntP (189 aa).

6 helical membrane passes run Pro-3–Gly-23, Ile-41–Ala-61, Val-65–Ile-85, Trp-106–Phe-128, Gly-141–Val-161, and Met-168–Ala-188.

Belongs to the MntP (TC 9.B.29) family.

Its subcellular location is the cell inner membrane. Its function is as follows. Probably functions as a manganese efflux pump. The polypeptide is Putative manganese efflux pump MntP (Pseudomonas aeruginosa (strain UCBPP-PA14)).